We begin with the raw amino-acid sequence, 138 residues long: Transcription antitermination protein NusB (138 aa).

The protein belongs to the NusB family.

Involved in transcription antitermination. Required for transcription of ribosomal RNA (rRNA) genes. Binds specifically to the boxA antiterminator sequence of the ribosomal RNA (rrn) operons. This Colwellia psychrerythraea (strain 34H / ATCC BAA-681) (Vibrio psychroerythus) protein is Transcription antitermination protein NusB.